We begin with the raw amino-acid sequence, 1054 residues long: Putative disease resistance RPP13-like protein 1 (1054 aa).

Leucine-zipper regions lie at residues 9 to 20 (LAAFLQALFQTL) and 39 to 53 (LERLSTALLTITAVL). Positions 117–147 (DFLDGNSEHLETRLEKVTIRLERLASQRNIL) form a coiled coil. Residues 152-462 (LTAMIPKQRL…AEGFLQQTRS (311 aa)) form the NB-ARC domain. 203 to 210 (GIGGVGKT) lines the ATP pocket. 5 LRR repeats span residues 579 to 600 (RLRVLSLSHYKIARLPPDFFKN), 603 to 624 (HARFLDLSRTELEKLPKSLCYM), 626 to 648 (NLQTLLLSYCSSLKELPTDISNL), 650 to 672 (NLRYLDLIGTKLRQMPRRFGRLK), and 676 to 697 (TLTTFFVSASDGSRISELGGLH). Residues 1018–1054 (PQYHHPQFHLPRSNVSGSPKSHGSHRSYDSRSSSRYD) form a disordered region. Over residues 1043–1054 (RSYDSRSSSRYD) the composition is skewed to basic and acidic residues.

It belongs to the disease resistance NB-LRR family. RPP13 subfamily.

Functionally, potential disease resistance protein. The sequence is that of Putative disease resistance RPP13-like protein 1 (RPPL1) from Arabidopsis thaliana (Mouse-ear cress).